The sequence spans 168 residues: 6,7-dimethyl-8-ribityllumazine synthase (168 aa).

5-amino-6-(D-ribitylamino)uracil is bound by residues Phe-24, 58 to 60 (ALE), and 82 to 84 (AVI). 87–88 (ET) provides a ligand contact to (2S)-2-hydroxy-3-oxobutyl phosphate. Residue His-90 is the Proton donor of the active site. Residue Asn-115 participates in 5-amino-6-(D-ribitylamino)uracil binding. Arg-129 provides a ligand contact to (2S)-2-hydroxy-3-oxobutyl phosphate.

Belongs to the DMRL synthase family.

The catalysed reaction is (2S)-2-hydroxy-3-oxobutyl phosphate + 5-amino-6-(D-ribitylamino)uracil = 6,7-dimethyl-8-(1-D-ribityl)lumazine + phosphate + 2 H2O + H(+). It functions in the pathway cofactor biosynthesis; riboflavin biosynthesis; riboflavin from 2-hydroxy-3-oxobutyl phosphate and 5-amino-6-(D-ribitylamino)uracil: step 1/2. Catalyzes the formation of 6,7-dimethyl-8-ribityllumazine by condensation of 5-amino-6-(D-ribitylamino)uracil with 3,4-dihydroxy-2-butanone 4-phosphate. This is the penultimate step in the biosynthesis of riboflavin. The polypeptide is 6,7-dimethyl-8-ribityllumazine synthase (Paraburkholderia phytofirmans (strain DSM 17436 / LMG 22146 / PsJN) (Burkholderia phytofirmans)).